The chain runs to 206 residues: Translocation protein SEC66 (206 aa).

Residues 1-27 (MSEFNETKFSNNGTFFETEEPIVETKS) are Lumenal-facing. 2 N-linked (GlcNAc...) asparagine glycosylation sites follow: Asn5 and Asn12. A helical; Signal-anchor for type II membrane protein transmembrane segment spans residues 28-48 (ISVYTPLIYVFILVVSLVMFA). Topologically, residues 49–206 (SSYRKKQAKK…KINNDGRLVN (158 aa)) are cytoplasmic.

It to S.pombe SpBC409.21. In terms of assembly, component of the heterotetrameric Sec62/63complex composed of SEC62, SEC63, SEC66 and SEC72. The Sec62/63 complex associates with the Sec61 complex to form the Sec complex. Part of a complex consisting of KAR2, SEC63, SEC66 and SEC72.

The protein resides in the endoplasmic reticulum membrane. Functionally, acts as a component of the Sec62/63 complex which is involved in SRP-independent post-translational translocation across the endoplasmic reticulum (ER) and functions together with the Sec61 complex and KAR2 in a channel-forming translocon complex. A cycle of assembly and disassembly of Sec62/63 complex from SEC61 may govern the activity of the translocon. SEC66 is required to attach or retain SEC72 in the SEC63 complex. It is essential for growth at elevated temperatures. The polypeptide is Translocation protein SEC66 (SEC66) (Saccharomyces cerevisiae (strain ATCC 204508 / S288c) (Baker's yeast)).